We begin with the raw amino-acid sequence, 628 residues long: MTTDTKATETRAFEADVSRLLHMMVHSVYSDKDVFLRELISNAADACEKLRFEAVSRPELLGDDPKPRISISADPDNKEITVEDNGIGMSRDDMAEALGTIARSGTRAFIERVGSGTEDTQLIGQFGVGFYSAFMVADRVDVISRLAGSEEAWRWSSDGKGSYEIAPAPLEAAPRRGTRVVLHLMDDAVSYTGSYRLEQLAKSQSGHVPVPITLIEKPGAEARDIADGTALWVRPKSEIKPEEYTDFYRSVAGQYDEPAATIHFRAEGRQEYSVLAFVPGSRPFDLFDQDRKGRMKLYVRRVFITDDADLLPRYLRFVRGLVDSADLPLNVSREMIQESPLLASIRKGLTNRVLGDLAKLAENEAEAYAKVWENFGVVLKEGLYEDYERREQLLKLARFHSTASGEGWRGLADYVAAMKEGQKAIFFMAGDDRARLEASPQLEGFKARGIEVLLLTDPVDSFWVTMAPDFDGKPFKSVTQGVAELSDIPLLDDAKKPDTAAAPEVDGFLAFVKSALGDAVSDVKASDRLTESAVCLVAPEHGPDRQFERLMNAAGRLDKAAKPILEINPRHERVLALAGLGDEDQAFKDDAAHLLYDEARVLDGDKPADARAFSERLARLIARGIAKG.

An a; substrate-binding region spans residues 1–333 (MTTDTKATET…SADLPLNVSR (333 aa)). Residues 334 to 549 (EMIQESPLLA…EHGPDRQFER (216 aa)) form a b region. The tract at residues 550 to 628 (LMNAAGRLDK…RLIARGIAKG (79 aa)) is c.

This sequence belongs to the heat shock protein 90 family. As to quaternary structure, homodimer.

The protein resides in the cytoplasm. Molecular chaperone. Has ATPase activity. In Mesorhizobium japonicum (strain LMG 29417 / CECT 9101 / MAFF 303099) (Mesorhizobium loti (strain MAFF 303099)), this protein is Chaperone protein HtpG.